Reading from the N-terminus, the 414-residue chain is Multifunctional CCA protein (414 aa).

ATP contacts are provided by glycine 8 and arginine 11. CTP-binding residues include glycine 8 and arginine 11. The Mg(2+) site is built by aspartate 21 and aspartate 23. Positions 91, 137, and 140 each coordinate ATP. Positions 91, 137, and 140 each coordinate CTP. An HD domain is found at 228–329; the sequence is TGIHTLMTLA…LKLFDAVDVW (102 aa).

Belongs to the tRNA nucleotidyltransferase/poly(A) polymerase family. Bacterial CCA-adding enzyme type 1 subfamily. In terms of assembly, monomer. Can also form homodimers and oligomers. Mg(2+) serves as cofactor. The cofactor is Ni(2+).

The enzyme catalyses a tRNA precursor + 2 CTP + ATP = a tRNA with a 3' CCA end + 3 diphosphate. It catalyses the reaction a tRNA with a 3' CCA end + 2 CTP + ATP = a tRNA with a 3' CCACCA end + 3 diphosphate. Catalyzes the addition and repair of the essential 3'-terminal CCA sequence in tRNAs without using a nucleic acid template. Adds these three nucleotides in the order of C, C, and A to the tRNA nucleotide-73, using CTP and ATP as substrates and producing inorganic pyrophosphate. tRNA 3'-terminal CCA addition is required both for tRNA processing and repair. Also involved in tRNA surveillance by mediating tandem CCA addition to generate a CCACCA at the 3' terminus of unstable tRNAs. While stable tRNAs receive only 3'-terminal CCA, unstable tRNAs are marked with CCACCA and rapidly degraded. This is Multifunctional CCA protein from Serratia proteamaculans (strain 568).